Reading from the N-terminus, the 334-residue chain is Phosphoribosylformylglycinamidine cyclo-ligase (334 aa).

The protein belongs to the AIR synthase family.

It is found in the cytoplasm. It catalyses the reaction 2-formamido-N(1)-(5-O-phospho-beta-D-ribosyl)acetamidine + ATP = 5-amino-1-(5-phospho-beta-D-ribosyl)imidazole + ADP + phosphate + H(+). Its pathway is purine metabolism; IMP biosynthesis via de novo pathway; 5-amino-1-(5-phospho-D-ribosyl)imidazole from N(2)-formyl-N(1)-(5-phospho-D-ribosyl)glycinamide: step 2/2. This Pyrococcus abyssi (strain GE5 / Orsay) protein is Phosphoribosylformylglycinamidine cyclo-ligase.